The primary structure comprises 122 residues: Large ribosomal subunit protein uL14 (122 aa).

Belongs to the universal ribosomal protein uL14 family. As to quaternary structure, part of the 50S ribosomal subunit. Forms a cluster with proteins L3 and L19. In the 70S ribosome, L14 and L19 interact and together make contacts with the 16S rRNA in bridges B5 and B8.

In terms of biological role, binds to 23S rRNA. Forms part of two intersubunit bridges in the 70S ribosome. The polypeptide is Large ribosomal subunit protein uL14 (Caldanaerobacter subterraneus subsp. tengcongensis (strain DSM 15242 / JCM 11007 / NBRC 100824 / MB4) (Thermoanaerobacter tengcongensis)).